Reading from the N-terminus, the 168-residue chain is Photosystem I assembly protein Ycf3 (168 aa).

3 TPR repeats span residues 35–68 (AFTYYRDGMSAQSEGNYAEALQNYYEATRLEIDP), 72–105 (SYILYNIGLIHTSNGEHTKALEYYFRAIERNPFL), and 120–153 (GEQAIRQGDSEIAEAWSDQAAEYWKQAIALTPGN).

Belongs to the Ycf3 family.

It is found in the plastid. Its subcellular location is the chloroplast thylakoid membrane. Its function is as follows. Essential for the assembly of the photosystem I (PSI) complex. May act as a chaperone-like factor to guide the assembly of the PSI subunits. The protein is Photosystem I assembly protein Ycf3 of Calycanthus floridus var. glaucus (Eastern sweetshrub).